A 156-amino-acid polypeptide reads, in one-letter code: Ribosomal RNA large subunit methyltransferase H (156 aa).

S-adenosyl-L-methionine-binding positions include L73, G104, and 123-128 (VSSLTL).

This sequence belongs to the RNA methyltransferase RlmH family. Homodimer.

It is found in the cytoplasm. The enzyme catalyses pseudouridine(1915) in 23S rRNA + S-adenosyl-L-methionine = N(3)-methylpseudouridine(1915) in 23S rRNA + S-adenosyl-L-homocysteine + H(+). In terms of biological role, specifically methylates the pseudouridine at position 1915 (m3Psi1915) in 23S rRNA. The chain is Ribosomal RNA large subunit methyltransferase H from Burkholderia mallei (strain NCTC 10247).